A 366-amino-acid chain; its full sequence is G-protein coupled receptor 183 (366 aa).

Residues Met1–Arg37 are Extracellular-facing. Asn21 carries an N-linked (GlcNAc...) asparagine glycan. Residues Val38–Arg63 form a helical membrane-spanning segment. Topologically, residues Pro64–Asp83 are cytoplasmic. The chain crosses the membrane as a helical span at residues Ile84 to Phe101. At His102–Lys111 the chain is on the extracellular side. A disulfide bond links Cys110 and Cys188. The chain crosses the membrane as a helical span at residues Ile112 to Val133. The Cytoplasmic portion of the chain corresponds to Asp134–Arg155. Residues Tyr156–Ser174 form a helical membrane-spanning segment. Residues Met175–Asn199 are Extracellular-facing. The helical transmembrane segment at Ile200–Cys222 threads the bilayer. Residues Tyr223–Lys248 are Cytoplasmic-facing. A helical membrane pass occupies residues Ala249–Leu272. At Gln273–Gln292 the chain is on the extracellular side. The helical transmembrane segment at Ile293 to Cys317 threads the bilayer. Topologically, residues Lys318–Glu366 are cytoplasmic.

The protein belongs to the G-protein coupled receptor 1 family.

The protein localises to the cell membrane. Its function is as follows. G-protein coupled receptor expressed in lymphocytes that acts as a chemotactic receptor for B-cells, T-cells, splenic dendritic cells, monocytes/macrophages and astrocytes. Receptor for oxysterol 7-alpha,25-dihydroxycholesterol (7-alpha,25-OHC) and other related oxysterols. Mediates cell positioning and movement of a number of cells by binding the 7-alpha,25-OHC ligand that forms a chemotactic gradient. Binding of 7-alpha,25-OHC mediates the correct localization of B-cells during humoral immune responses. This Salmo salar (Atlantic salmon) protein is G-protein coupled receptor 183 (gpr183).